A 426-amino-acid polypeptide reads, in one-letter code: Serine--tRNA ligase (426 aa).

L-serine is bound at residue 233 to 235 (TAE). Residue 264–266 (RRE) participates in ATP binding. Glu287 contributes to the L-serine binding site. Residue 351 to 354 (EISS) participates in ATP binding. L-serine is bound at residue Ser386.

It belongs to the class-II aminoacyl-tRNA synthetase family. Type-1 seryl-tRNA synthetase subfamily. As to quaternary structure, homodimer. The tRNA molecule binds across the dimer.

It localises to the cytoplasm. It catalyses the reaction tRNA(Ser) + L-serine + ATP = L-seryl-tRNA(Ser) + AMP + diphosphate + H(+). The enzyme catalyses tRNA(Sec) + L-serine + ATP = L-seryl-tRNA(Sec) + AMP + diphosphate + H(+). The protein operates within aminoacyl-tRNA biosynthesis; selenocysteinyl-tRNA(Sec) biosynthesis; L-seryl-tRNA(Sec) from L-serine and tRNA(Sec): step 1/1. In terms of biological role, catalyzes the attachment of serine to tRNA(Ser). Is also able to aminoacylate tRNA(Sec) with serine, to form the misacylated tRNA L-seryl-tRNA(Sec), which will be further converted into selenocysteinyl-tRNA(Sec). This Prochlorococcus marinus (strain NATL2A) protein is Serine--tRNA ligase.